A 57-amino-acid chain; its full sequence is Gene 19.3 protein (57 aa).

The chain is Gene 19.3 protein (19.3) from Escherichia coli (Bacteriophage T3).